The sequence spans 511 residues: GMP synthase [glutamine-hydrolyzing] (511 aa).

The region spanning 5-195 (DILVLDFGSQ…AKYACNCESV (191 aa)) is the Glutamine amidotransferase type-1 domain. Cys-82 serves as the catalytic Nucleophile. Active-site residues include His-169 and Glu-171. A GMPS ATP-PPase domain is found at 196 to 386 (WNMGSFAKTQ…LGLSKEVVYR (191 aa)). An ATP-binding site is contributed by 223-229 (SGGVDSS).

Homodimer.

The enzyme catalyses XMP + L-glutamine + ATP + H2O = GMP + L-glutamate + AMP + diphosphate + 2 H(+). It participates in purine metabolism; GMP biosynthesis; GMP from XMP (L-Gln route): step 1/1. Its function is as follows. Catalyzes the synthesis of GMP from XMP. This chain is GMP synthase [glutamine-hydrolyzing], found in Campylobacter jejuni (strain RM1221).